A 298-amino-acid polypeptide reads, in one-letter code: ADP/ATP translocase 3 (298 aa).

Met1 is modified (N-acetylmethionine). The Mitochondrial intermembrane portion of the chain corresponds to 1–7 (MTEQAIS). Thr2 is modified (N-acetylthreonine; in ADP/ATP translocase 3, N-terminally processed). One copy of the Solcar 1 repeat lies at 6–98 (ISFAKDFLAG…FAFKDKYKQI (93 aa)). The helical transmembrane segment at 8–37 (FAKDFLAGGIAAAISKTAVAPIERVKLLLQ) threads the bilayer. At 38–74 (VQHASKQIAADKQYKGIVDCIVRIPKEQGVLSFWRGN) the chain is on the mitochondrial matrix side. Lys52 is modified (N6,N6,N6-trimethyllysine). Residues 75 to 99 (LANVIRYFPTQALNFAFKDKYKQIF) traverse the membrane as a helical segment. Positions 80 and 92 each coordinate ADP. Topologically, residues 100 to 109 (LGGVDKHTQF) are mitochondrial intermembrane. Lys105 carries the N6-acetyllysine modification. A helical membrane pass occupies residues 110–130 (WRYFAGNLASGGAAGATSLCF). Solcar repeat units lie at residues 111 to 201 (RYFA…AKGM) and 212 to 297 (VSWM…LKKV). At 131–178 (VYPLDFARTRLAADVGKSGTEREFRGLGDCLVKITKSDGIRGLYQGFS) the chain is on the mitochondrial matrix side. The helical transmembrane segment at 179 to 199 (VSVQGIIIYRAAYFGVYDTAK) threads the bilayer. Over 200–210 (GMLPDPKNTHI) the chain is Mitochondrial intermembrane. Residues 211-231 (VVSWMIAQTVTAVAGVVSYPF) traverse the membrane as a helical segment. The Mitochondrial matrix segment spans residues 232 to 273 (DTVRRRMMMQSGRKGADIMYTGTVDCWRKIFRDEGGKAFFKG). Arg235 provides a ligand contact to ADP. Residues 235 to 240 (RRRMMM) are important for transport activity. Residues 235–240 (RRRMMM) carry the Nucleotide carrier signature motif motif. Lys268 is subject to N6-acetyllysine. A helical membrane pass occupies residues 274–291 (AWSNVLRGMGGAFVLVLY). Residues 292–298 (DELKKVI) are Mitochondrial intermembrane-facing.

Belongs to the mitochondrial carrier (TC 2.A.29) family. In terms of assembly, monomer. Found in a complex with ARL2, ARL2BP and SLC25A6/ANT3. As to quaternary structure, (Microbial infection) Interacts with influenza A virus PB1-F2 protein. (Microbial infection) Interacts with HIV-1 Vpr. Trimethylated by ANTKMT at Lys-52. In terms of tissue distribution, expressed in erythrocytes (at protein level).

It localises to the mitochondrion inner membrane. Its subcellular location is the membrane. The catalysed reaction is ADP(in) + ATP(out) = ADP(out) + ATP(in). It carries out the reaction H(+)(in) = H(+)(out). With respect to regulation, the matrix-open state (m-state) is inhibited by the membrane-permeable bongkrekic acid (BKA). The cytoplasmic-open state (c-state) is inhibited by the membrane-impermeable toxic inhibitor carboxyatractyloside (CATR). Proton transporter activity is inhibited by ADP:ATP antiporter activity. In terms of biological role, ADP:ATP antiporter that mediates import of ADP into the mitochondrial matrix for ATP synthesis, and export of ATP out to fuel the cell. Cycles between the cytoplasmic-open state (c-state) and the matrix-open state (m-state): operates by the alternating access mechanism with a single substrate-binding site intermittently exposed to either the cytosolic (c-state) or matrix (m-state) side of the inner mitochondrial membrane. In addition to its ADP:ATP antiporter activity, also involved in mitochondrial uncoupling and mitochondrial permeability transition pore (mPTP) activity. Plays a role in mitochondrial uncoupling by acting as a proton transporter: proton transport uncouples the proton flows via the electron transport chain and ATP synthase to reduce the efficiency of ATP production and cause mitochondrial thermogenesis. Proton transporter activity is inhibited by ADP:ATP antiporter activity, suggesting that SLC25A6/ANT3 acts as a master regulator of mitochondrial energy output by maintaining a delicate balance between ATP production (ADP:ATP antiporter activity) and thermogenesis (proton transporter activity). Proton transporter activity requires free fatty acids as cofactor, but does not transport it. Also plays a key role in mPTP opening, a non-specific pore that enables free passage of the mitochondrial membranes to solutes of up to 1.5 kDa, and which contributes to cell death. It is however unclear if SLC25A6/ANT3 constitutes a pore-forming component of mPTP or regulates it. The polypeptide is ADP/ATP translocase 3 (Homo sapiens (Human)).